The following is a 349-amino-acid chain: Cyclic amide hydrolase (349 aa).

Residues 1–90 are RU A; that stretch reads MTSPEDTAGV…AVFVDDPASS (90 aa). Residue arginine 38 participates in substrate binding. Residues 99–231 form an RU B region; sequence GLSIGVTTTA…AAVLVMGNSP (133 aa). Lysine 149 is an active-site residue. Substrate is bound by residues arginine 176, 214–215, lysine 311, and 330–331; these read SA and SG. Residue serine 214 is the Nucleophile of the active site. Residues 237–349 are RU C; that stretch reads YRIGHGVLRD…GGGTVAVIAR (113 aa).

The protein belongs to the cyclic amide hydrolase (CyAH) family. As to quaternary structure, homotetramer.

Cyclic amide hydrolase of unknown substrate specificity. Catalyzes the hydrolytic ring-opening of a cyclic amide. Does not act on cyanuric acid nor barbituric acid. The protein is Cyclic amide hydrolase of Rhodococcus sp.